Consider the following 115-residue polypeptide: Dolichyl-diphosphooligosaccharide--protein glycosyltransferase subunit DAD1 (115 aa).

At 1–31 (MVKSTSKDAQDLFRSLRSAYSATPTNLKIID) the chain is on the cytoplasmic side. The chain crosses the membrane as a helical span at residues 32 to 52 (LYVVFAVFTALIQVVYMALVG). The Lumenal segment spans residues 53–55 (SFP). A helical membrane pass occupies residues 56–76 (FNSFLSGVLSCIGTAVLAVCL). Residues 77 to 94 (RIQVNKENKEFKDLAPER) lie on the Cytoplasmic side of the membrane. The helical transmembrane segment at 95–115 (AFADFVLCNLVLHLVIINFLG) threads the bilayer.

The protein belongs to the DAD/OST2 family. Component of the oligosaccharyltransferase (OST) complex. In terms of tissue distribution, ubiquitous.

The protein resides in the endoplasmic reticulum membrane. It functions in the pathway protein modification; protein glycosylation. Its function is as follows. Subunit of the oligosaccharyl transferase (OST) complex that catalyzes the initial transfer of a defined glycan (Glc(3)Man(9)GlcNAc(2) in eukaryotes) from the lipid carrier dolichol-pyrophosphate to an asparagine residue within an Asn-X-Ser/Thr consensus motif in nascent polypeptide chains, the first step in protein N-glycosylation. N-glycosylation occurs cotranslationally and the complex associates with the Sec61 complex at the channel-forming translocon complex that mediates protein translocation across the endoplasmic reticulum (ER). All subunits are required for a maximal enzyme activity. In Arabidopsis thaliana (Mouse-ear cress), this protein is Dolichyl-diphosphooligosaccharide--protein glycosyltransferase subunit DAD1 (DAD1).